The sequence spans 331 residues: N-arachidonyl glycine receptor (331 aa).

The Extracellular segment spans residues 1–26; sequence MATLSNHNQLDLSNGSHPEEYKIAAL. N14 carries N-linked (GlcNAc...) asparagine glycosylation. Residues 27–47 form a helical membrane-spanning segment; that stretch reads VFYSCIFLIGLFVNVTALWVF. Topologically, residues 48-56 are cytoplasmic; the sequence is SCTTKKRTT. The chain crosses the membrane as a helical span at residues 57–77; that stretch reads VTIYMMNVALLDLVFILSLPF. Topologically, residues 78-95 are extracellular; the sequence is RMFYYAKGEWPFGEYFCH. C94 and C172 are disulfide-bonded. A helical membrane pass occupies residues 96–116; sequence ILGALVVFYPSLALWLLAFIS. The Cytoplasmic portion of the chain corresponds to 117–138; sequence ADRYMAIVQPKYAKELKNTGKA. The chain crosses the membrane as a helical span at residues 139-159; sequence VLACGGVWVMTLTTTVPLLLL. Residues 160–191 lie on the Extracellular side of the membrane; the sequence is YEDPDKASSPATCLKISDITHLKAVNVLNFTR. N188 carries an N-linked (GlcNAc...) asparagine glycan. The helical transmembrane segment at 192 to 212 threads the bilayer; the sequence is LIFFFLIPLFIMIGCYVVIIH. At 213–236 the chain is on the cytoplasmic side; the sequence is SLLRGQTSKLKPKVKEKSIRIIMT. A helical membrane pass occupies residues 237-257; sequence LLLQVLVCFVPFHICFAVLML. Residues 258–268 are Extracellular-facing; the sequence is QGQENSYSPWG. Residues 269–289 form a helical membrane-spanning segment; sequence AFTTFLMNLSTCLDVVLYYIV. Residues 290-331 are Cytoplasmic-facing; sequence SKQFQARVISVMLYRNYLRSVRRKSVRSGSLRSLSNMNSEML. S322 bears the Phosphoserine mark.

Belongs to the G-protein coupled receptor 1 family. In terms of tissue distribution, expressed in the eye including cornea, retina, iris and ciliary epithelium (at protein level). Expressed in spleen, liver and lymphocytes with highest expression levels in intestinal intraepithelial lymphocytes.

It is found in the cell membrane. The protein localises to the cytoplasmic vesicle membrane. G protein-coupled receptor (GPCR) that plays a role in diverse physiological processes particularly within the immune and nervous systems. Becomes active when triggered by various endogenous ligands including endocannabinoid N-arachidonyl glycine (NAGly), delta-9-tetrahydrocannabinol or resolvin D2/RvD2 derived from the omega-3 fatty acid docosahexaenoic acid (DHA). Upon RvD2 binding, facilitates the resolution of inflammation, aiding in tissue repair and homeostasis. Mechanistically, RvD2 ligation initiates Galphas protein coupling, activation of cAMP-PKA signaling pathway and phosphorylation of STAT3, leading to RvD2-stimulated macrophage phagocytosis. Mediates NAGly-induced process of reorganization of actin filaments and induction of acrosomal exocytosis. Activation by N-arachidonoyl glycine (NAGly) can also induce apoptosis in macrophages. Plays a role in homeostasis of CD8+ subsets of intraepithelial lymphocytes (IELs) (CD8alphaalpha and CD8alphabeta IELs) in small intestine by supporting preferential migration of CD8alphaalpha T-cells to intraepithelial compartment over lamina propria compartment, and by mediating their reconstitution into small intestine after bone marrow transplant. Also participates in hypotensive responses, mediating reduction in intraocular and blood pressure. In Mus musculus (Mouse), this protein is N-arachidonyl glycine receptor.